We begin with the raw amino-acid sequence, 398 residues long: Carbamoyl phosphate synthase small chain (398 aa).

The tract at residues 1–207 (MIQTISSSRP…KGYGTNNVHN (207 aa)) is CPSase. Ser-60, Gly-257, and Gly-259 together coordinate L-glutamine. Residues 209–397 (HIVAIDYGIK…CDLIMNHKKI (189 aa)) enclose the Glutamine amidotransferase type-1 domain. Cys-286 acts as the Nucleophile in catalysis. L-glutamine-binding residues include Leu-287, Gln-290, Asn-328, Gly-330, and Phe-331. Active-site residues include His-370 and Glu-372.

This sequence belongs to the CarA family. Composed of two chains; the small (or glutamine) chain promotes the hydrolysis of glutamine to ammonia, which is used by the large (or ammonia) chain to synthesize carbamoyl phosphate. Tetramer of heterodimers (alpha,beta)4.

The catalysed reaction is hydrogencarbonate + L-glutamine + 2 ATP + H2O = carbamoyl phosphate + L-glutamate + 2 ADP + phosphate + 2 H(+). It carries out the reaction L-glutamine + H2O = L-glutamate + NH4(+). The protein operates within amino-acid biosynthesis; L-arginine biosynthesis; carbamoyl phosphate from bicarbonate: step 1/1. It functions in the pathway pyrimidine metabolism; UMP biosynthesis via de novo pathway; (S)-dihydroorotate from bicarbonate: step 1/3. Functionally, small subunit of the glutamine-dependent carbamoyl phosphate synthetase (CPSase). CPSase catalyzes the formation of carbamoyl phosphate from the ammonia moiety of glutamine, carbonate, and phosphate donated by ATP, constituting the first step of 2 biosynthetic pathways, one leading to arginine and/or urea and the other to pyrimidine nucleotides. The small subunit (glutamine amidotransferase) binds and cleaves glutamine to supply the large subunit with the substrate ammonia. The protein is Carbamoyl phosphate synthase small chain of Bartonella tribocorum (strain CIP 105476 / IBS 506).